A 63-amino-acid polypeptide reads, in one-letter code: MKASELKDKSVEELNTELLGLLREQFNMRMQASTGQLAQTHTLRTVRRDIARVKTVINQKAGQ.

This sequence belongs to the universal ribosomal protein uL29 family.

The chain is Large ribosomal subunit protein uL29 from Pseudoalteromonas translucida (strain TAC 125).